A 353-amino-acid polypeptide reads, in one-letter code: Photosystem II D2 protein (353 aa).

Thr2 is subject to N-acetylthreonine. Thr2 carries the phosphothreonine modification. A helical membrane pass occupies residues 41 to 61 (CAYFALGGWFTGTTFVTSWYT). His118 contacts chlorophyll a. A helical transmembrane segment spans residues 125 to 141 (GFMLRQFELARPVQLRP). Pheophytin a is bound by residues Gln130 and Asn143. Residues 153–166 (VFLSVFLIYPLGQS) form a helical membrane-spanning segment. Chlorophyll a is bound at residue His198. A helical transmembrane segment spans residues 208-228 (AVLLCAIHGATVENTLFEDGD). Residues His215 and Phe262 each coordinate a plastoquinone. His215 serves as a coordination point for Fe cation. His269 is a binding site for Fe cation. The helical transmembrane segment at 279–295 (GLWMSAIGVVGLALNLR) threads the bilayer.

The protein belongs to the reaction center PufL/M/PsbA/D family. In terms of assembly, PSII is composed of 1 copy each of membrane proteins PsbA, PsbB, PsbC, PsbD, PsbE, PsbF, PsbH, PsbI, PsbJ, PsbK, PsbL, PsbM, PsbT, PsbX, PsbY, PsbZ, Psb30/Ycf12, at least 3 peripheral proteins of the oxygen-evolving complex and a large number of cofactors. It forms dimeric complexes. It depends on The D1/D2 heterodimer binds P680, chlorophylls that are the primary electron donor of PSII, and subsequent electron acceptors. It shares a non-heme iron and each subunit binds pheophytin, quinone, additional chlorophylls, carotenoids and lipids. There is also a Cl(-1) ion associated with D1 and D2, which is required for oxygen evolution. The PSII complex binds additional chlorophylls, carotenoids and specific lipids. as a cofactor. Post-translationally, only phosphorylated in mesophyll cells, phosphorylation increases when cells are grown under high rather than low light regimes (70 vs 900 umol photons/m-2/s).

Its subcellular location is the plastid. The protein resides in the chloroplast thylakoid membrane. It catalyses the reaction 2 a plastoquinone + 4 hnu + 2 H2O = 2 a plastoquinol + O2. Functionally, photosystem II (PSII) is a light-driven water:plastoquinone oxidoreductase that uses light energy to abstract electrons from H(2)O, generating O(2) and a proton gradient subsequently used for ATP formation. It consists of a core antenna complex that captures photons, and an electron transfer chain that converts photonic excitation into a charge separation. The D1/D2 (PsbA/PsbD) reaction center heterodimer binds P680, the primary electron donor of PSII as well as several subsequent electron acceptors. D2 is needed for assembly of a stable PSII complex. This Zea mays (Maize) protein is Photosystem II D2 protein.